A 240-amino-acid polypeptide reads, in one-letter code: Small ribosomal subunit protein uS3m (240 aa).

This sequence belongs to the universal ribosomal protein uS3 family.

Its subcellular location is the mitochondrion. This Chondrus crispus (Carrageen Irish moss) protein is Small ribosomal subunit protein uS3m (RPS3).